Consider the following 405-residue polypeptide: Tryptophan synthase beta chain (405 aa).

The residue at position 98 (lysine 98) is an N6-(pyridoxal phosphate)lysine.

The protein belongs to the TrpB family. Tetramer of two alpha and two beta chains. Pyridoxal 5'-phosphate serves as cofactor.

It catalyses the reaction (1S,2R)-1-C-(indol-3-yl)glycerol 3-phosphate + L-serine = D-glyceraldehyde 3-phosphate + L-tryptophan + H2O. It participates in amino-acid biosynthesis; L-tryptophan biosynthesis; L-tryptophan from chorismate: step 5/5. The beta subunit is responsible for the synthesis of L-tryptophan from indole and L-serine. In Xylella fastidiosa (strain 9a5c), this protein is Tryptophan synthase beta chain (trpB).